The chain runs to 100 residues: NADH-quinone oxidoreductase subunit K (100 aa).

Helical transmembrane passes span 4–24 (LFHG…SLIV), 28–48 (ILFM…ALVV), and 60–80 (IMYI…LALL).

It belongs to the complex I subunit 4L family. NDH-1 is composed of 13 different subunits. Subunits NuoA, H, J, K, L, M, N constitute the membrane sector of the complex.

It localises to the cell membrane. The catalysed reaction is a quinone + NADH + 5 H(+)(in) = a quinol + NAD(+) + 4 H(+)(out). Its function is as follows. NDH-1 shuttles electrons from NADH, via FMN and iron-sulfur (Fe-S) centers, to quinones in the respiratory chain. The immediate electron acceptor for the enzyme in this species is believed to be ubiquinone. Couples the redox reaction to proton translocation (for every two electrons transferred, four hydrogen ions are translocated across the cytoplasmic membrane), and thus conserves the redox energy in a proton gradient. This Buchnera aphidicola subsp. Schizaphis graminum (strain Sg) protein is NADH-quinone oxidoreductase subunit K.